The chain runs to 159 residues: Phosphopantetheine adenylyltransferase (159 aa).

Threonine 9 lines the substrate pocket. Residues 9–10 and histidine 17 each bind ATP; that span reads TF. Substrate is bound by residues lysine 41, leucine 73, and arginine 87. Residues 88-90, glutamate 98, and 123-129 contribute to the ATP site; these read GLR and YSFISST.

The protein belongs to the bacterial CoaD family. Homohexamer. It depends on Mg(2+) as a cofactor.

The protein localises to the cytoplasm. It carries out the reaction (R)-4'-phosphopantetheine + ATP + H(+) = 3'-dephospho-CoA + diphosphate. It participates in cofactor biosynthesis; coenzyme A biosynthesis; CoA from (R)-pantothenate: step 4/5. Reversibly transfers an adenylyl group from ATP to 4'-phosphopantetheine, yielding dephospho-CoA (dPCoA) and pyrophosphate. The protein is Phosphopantetheine adenylyltransferase of Pseudomonas putida (strain ATCC 700007 / DSM 6899 / JCM 31910 / BCRC 17059 / LMG 24140 / F1).